The chain runs to 100 residues: ATP synthase subunit c (100 aa).

The next 2 membrane-spanning stretches (helical) occupy residues 26 to 46 (FSVVAAGIGLGVAALGGAIGM) and 71 to 91 (MFIALAMIEAQVIYALVIALI).

The protein belongs to the ATPase C chain family. In terms of assembly, F-type ATPases have 2 components, F(1) - the catalytic core - and F(0) - the membrane proton channel. F(1) has five subunits: alpha(3), beta(3), gamma(1), delta(1), epsilon(1). F(0) has three main subunits: a(1), b(2) and c(10-14). The alpha and beta chains form an alternating ring which encloses part of the gamma chain. F(1) is attached to F(0) by a central stalk formed by the gamma and epsilon chains, while a peripheral stalk is formed by the delta and b chains.

It localises to the cell inner membrane. Its function is as follows. F(1)F(0) ATP synthase produces ATP from ADP in the presence of a proton or sodium gradient. F-type ATPases consist of two structural domains, F(1) containing the extramembraneous catalytic core and F(0) containing the membrane proton channel, linked together by a central stalk and a peripheral stalk. During catalysis, ATP synthesis in the catalytic domain of F(1) is coupled via a rotary mechanism of the central stalk subunits to proton translocation. Key component of the F(0) channel; it plays a direct role in translocation across the membrane. A homomeric c-ring of between 10-14 subunits forms the central stalk rotor element with the F(1) delta and epsilon subunits. The sequence is that of ATP synthase subunit c from Campylobacter fetus subsp. fetus (strain 82-40).